A 593-amino-acid polypeptide reads, in one-letter code: CTD kinase subunit alpha (593 aa).

2 stretches are compositionally biased toward polar residues: residues 1–17 (MSYSKSTIYRRQGTEPN) and 29–51 (QLSGTNEESLGGHTLSSNAFKNN). A disordered region spans residues 1–262 (MSYSKSTIYR…ESVPAPLPSP (262 aa)). Phosphoserine occurs at positions 56 and 58. The segment covering 90–103 (RSRKSRRRKGKKAF) has biased composition (basic residues). 2 positions are modified to phosphoserine: S104 and S109. Residues 139–152 (SSSSASVSPISPSA) show a composition bias toward low complexity. Residues 160–170 (QASSFRRSPPS) show a composition bias toward polar residues. Residues 198 to 215 (IPHETTSSDTQKKSSVSS) show a composition bias toward low complexity. The region spanning 277–561 (YEKIDQIGEG…AHETLMHEYF (285 aa)) is the Protein kinase domain. Residues 283 to 291 (IGEGTYGKV) and K306 contribute to the ATP site. Residue D399 is the Proton acceptor of the active site.

This sequence belongs to the protein kinase superfamily. CMGC Ser/Thr protein kinase family. CDC2/CDKX subfamily. In terms of assembly, CTDK-I consists of three subunits, ctk1/lsk1, ctk2/lsc1 and ctk3 (also called alpha, beta and gamma). Interacts with ctk2/lsc1. This interaction is dependent on kinase activity.

It localises to the nucleus. The protein resides in the nucleolus. The catalysed reaction is [DNA-directed RNA polymerase] + ATP = phospho-[DNA-directed RNA polymerase] + ADP + H(+). In terms of biological role, catalytic subunit of the CTDK-I complex, which hyperphosphorylates the C-terminal heptapeptide repeat domain (CTD) of the largest RNA polymerase II subunit. Involved in RNA polymerase II transcriptional elongation and pre-mRNA 3'-end processing. Together with ctk2/lsc1, required for the regulation of cytokinesis by phosphorylating 'Ser-2' residues found in the heptad repeats of the CTD. Required for nuclear localization of ctk2/lsc1. Positively regulates the septation initiation network (SIN) and promotes successful completion of cytokinesis in response to perturbation of the actomyosin ring. Acts in parallel to clp1 to promote actomyosin ring stability upon cytokinesis checkpoint activation. The chain is CTD kinase subunit alpha from Schizosaccharomyces pombe (strain 972 / ATCC 24843) (Fission yeast).